Here is a 517-residue protein sequence, read N- to C-terminus: MKVACIGAGPGGLFFATLLKRSRPDAEVVVFERNRPDDTFGFGVVFSDATLDAIDAADPVLSEALEKHGRHWDDIEVRVHGERERVGGMGMAAVVRKTLLSLLQERARAEGVQMRFQDEVRDPAELDDFDLVVVCDGANSRFRTLFADDFGPTAEVASAKFIWFGTTYMFDGLTFVHQDGPHGVFAAHAYPISDSLSTFIVETDADSWARAGLDAFDPATPLGMSDEKTKSYLEDLFRAQIDGHPLVGNNSRWANFATRRARSWRSGKWVLLGDAAHTAHFSVGSGTKMAMEDAVALAETLGEASRSVPEALDLYEERRRPKVERIQNSARPSLSWWEHFGRYVRSFDAPTQFAFHFLTRSIPRGKLAVRDAAYVDRVDGWWLRHHEAGPLKTPFRVGPYRLPTRRVTVGDDLLTGTDGTGIPMVPFSGQPFGAGVWIDAPDTEEGLPLALDQVRETAEAGVLLVGVRGGTALTRVLVAEEARLAHSLPAAIVGAYDDDTATTLVLSGRADLVGGTK.

This sequence belongs to the aromatic-ring hydroxylase family. KMO subfamily.

The catalysed reaction is 2-hydroxybenzoyl-CoA + NADH + O2 + H(+) = 2,5-dihydroxybenzoyl-CoA + NAD(+) + H2O. Functionally, involved in the degradation of salicylate via a pathway involving coenzyme A derivative. Catalyzes the aromatic hydroxylation of salicylyl-CoA to yield gentisyl-CoA. The polypeptide is Salicyloyl-CoA 5-hydroxylase (Streptomyces sp).